The sequence spans 134 residues: Auxin-responsive protein SAUR40 (134 aa).

The protein belongs to the ARG7 family. In terms of assembly, interacts with and inhibits PP2C-D subfamily of type 2C phosphatases such as PP2C67/PP2C-D1.

Its subcellular location is the cytoplasm. Functionally, provide a mechanistic link between auxin and plasma membrane H(+)-ATPases (PM H(+)-ATPases, e.g. AHA1 and AHA2), and triggers PM H(+)-ATPases activity by promoting phosphorylation of their C-terminal autoinhibitory domain as a result of PP2C-D subfamily of type 2C phosphatases inhibition, thus leading to the acidification of the apoplast and the facilitation of solutes and water uptake to drive cell expansion. Plays a role in the regulation of cell expansion, root meristem patterning and auxin transport. The chain is Auxin-responsive protein SAUR40 from Arabidopsis thaliana (Mouse-ear cress).